The sequence spans 112 residues: Secretoglobin family 2B member 20 (112 aa).

The first 23 residues, 1–23 (MKGTLLLLGLLVTGELSFQTTEA), serve as a signal peptide directing secretion. An N-linked (GlcNAc...) asparagine glycan is attached at N50.

The protein belongs to the secretoglobin family. In terms of tissue distribution, expressed in lacrimal gland, at higher level in males than females. Expressed in the submandibular gland.

The protein resides in the secreted. This Mus musculus (Mouse) protein is Secretoglobin family 2B member 20 (Scgb2b20).